The primary structure comprises 914 residues: TRPM8 channel-associated factor 3 (914 aa).

Positions 533-832 (NSWVSTGLYL…TYLQLQEGFG (300 aa)) constitute a Peptidase M60 domain.

This sequence belongs to the TCAF family.

Functionally, may play a role in the regulation of the cation channel TRPM8 activity. This chain is TRPM8 channel-associated factor 3, found in Rattus norvegicus (Rat).